The chain runs to 417 residues: MDRIIVEGGRRLTGTVEISGAKNAALPILASSLLTNGTCTYTNVPDLRDIQSIKELLTHLGAKIECQGTTVQVDASGVNNHEAPYELVRKMRASILVLCPLVARLGRARVSLPGGCAIGERPIDFHLKGLEAMGADIALEHGYVNASAPKLTGGSIYFDVPSVTGTENLLMAAALADGTTRIGNAACEPEVTALVDVLNQMGANITGAGTPEITIQGVPSLNPVSVSIIPDRIETGTFMVAAALTKGDITITNAEPSHLKGQLDKLAQTGARIEVNGKVIRVVGGDTIKSVDVKTLPYPGFPTDMQAQFMVLMSVASGLSIITETIFENRFIHVSELKRMGADITISGNTAMVAGAPKLSGAPVMASDLRASASLVLAGLVADGTTEISRVYHLDRGYENLEEKFERLGASIRRVTP.

22–23 (KN) is a binding site for phosphoenolpyruvate. UDP-N-acetyl-alpha-D-glucosamine is bound at residue Arg92. The active-site Proton donor is the Cys116. Position 116 is a 2-(S-cysteinyl)pyruvic acid O-phosphothioketal (Cys116). 2 residues coordinate UDP-N-acetyl-alpha-D-glucosamine: Asp304 and Ile326.

Belongs to the EPSP synthase family. MurA subfamily.

It is found in the cytoplasm. The enzyme catalyses phosphoenolpyruvate + UDP-N-acetyl-alpha-D-glucosamine = UDP-N-acetyl-3-O-(1-carboxyvinyl)-alpha-D-glucosamine + phosphate. It participates in cell wall biogenesis; peptidoglycan biosynthesis. Cell wall formation. Adds enolpyruvyl to UDP-N-acetylglucosamine. This chain is UDP-N-acetylglucosamine 1-carboxyvinyltransferase, found in Desulfosudis oleivorans (strain DSM 6200 / JCM 39069 / Hxd3) (Desulfococcus oleovorans).